The chain runs to 1226 residues: Phosphatidylinositol 3,4,5-trisphosphate 5-phosphatase 2B (1226 aa).

The 97-residue stretch at 6–102 folds into the SH2 domain; it reads WYHRDISRVR…GLVAPLLYPV (97 aa). Residues 106–144 form a disordered region; the sequence is SEANDESSDGDDEKPGSTFANSPPRAISPTATSPPSSSA. Positions 108–117 are enriched in acidic residues; the sequence is ANDESSDGDD. Residues 127 to 144 are compositionally biased toward low complexity; it reads SPPRAISPTATSPPSSSA. The NPXY motif motif lies at 906-909; that stretch reads NPAY. Position 909 is a phosphotyrosine (tyrosine 909). Disordered stretches follow at residues 945–964 and 985–1035; these read RVTGSHGHGKRSARRSDFTE and SSAA…LSGK. The segment covering 1011–1025 has biased composition (low complexity); it reads HSSNSSLQLQSHKNN. Residues 1163–1226 enclose the SAM domain; it reads GAPETVRELL…ILENLPKIWD (64 aa).

It belongs to the inositol 1,4,5-trisphosphate 5-phosphatase family. In terms of processing, tyrosine phosphorylated by the members of the SRC family after exposure to a diverse array of extracellular stimuli.

The protein localises to the cytoplasm. The protein resides in the cytosol. Its subcellular location is the cytoskeleton. It is found in the membrane. It localises to the cell projection. The protein localises to the filopodium. The protein resides in the lamellipodium. Its subcellular location is the nucleus. It is found in the nucleus speckle. The catalysed reaction is a 1,2-diacyl-sn-glycero-3-phospho-(1D-myo-inositol-3,4,5-trisphosphate) + H2O = a 1,2-diacyl-sn-glycero-3-phospho-(1D-myo-inositol-3,4-bisphosphate) + phosphate. In terms of biological role, phosphatidylinositol (PtdIns) phosphatase that specifically hydrolyzes the 5-phosphate of phosphatidylinositol-3,4,5-trisphosphate (PtdIns(3,4,5)P3) to produce PtdIns(3,4)P2, thereby negatively regulating the PI3K (phosphoinositide 3-kinase) pathways. Plays a central role in regulation of PI3K-dependent insulin signaling, although the precise molecular mechanisms and signaling pathways remain unclear. Part of a signaling pathway that regulates actin cytoskeleton remodeling. Required for the maintenance and dynamic remodeling of actin structures as well as in endocytosis, having a major impact on ligand-induced EGFR internalization and degradation. Participates in regulation of cortical and submembraneous actin. Regulates cell adhesion and cell spreading. Acts as a negative regulator of the FC-gamma-RIIA receptor (FCGR2A). Mediates signaling from the FC-gamma-RIIB receptor (FCGR2B), playing a central role in terminating signal transduction from activating immune/hematopoietic cell receptor systems. May also hydrolyze PtdIns(1,3,4,5)P4, and could thus affect the levels of the higher inositol polyphosphates like InsP6. This chain is Phosphatidylinositol 3,4,5-trisphosphate 5-phosphatase 2B (inppl1b), found in Danio rerio (Zebrafish).